Consider the following 125-residue polypeptide: Prepro-urotensin II-gamma (125 aa).

The N-terminal stretch at 1–21 (MMCNLLLSCSVLLLSCSHLLA) is a signal peptide. Residues 109-111 (QFR) constitute a propeptide that is removed on maturation. Residues cysteine 119 and cysteine 124 are joined by a disulfide bond.

This sequence belongs to the urotensin-2 family.

Its subcellular location is the secreted. Urotensin is found in the teleost caudal neurosecretory system. It has a suggested role in osmoregulation and as a corticotropin-releasing factor. The non-hormonal portion of this precursor may be a urotensin binding protein, urophysin. In Cyprinus carpio (Common carp), this protein is Prepro-urotensin II-gamma.